The primary structure comprises 22 residues: thr operon leader peptide (22 aa).

The protein belongs to the thr operon leader peptide family.

Functionally, this protein is involved in control of the biosynthesis of threonine. The polypeptide is thr operon leader peptide (Yersinia enterocolitica serotype O:8 / biotype 1B (strain NCTC 13174 / 8081)).